We begin with the raw amino-acid sequence, 957 residues long: Glycine dehydrogenase (decarboxylating) (957 aa).

K708 is subject to N6-(pyridoxal phosphate)lysine.

This sequence belongs to the GcvP family. The glycine cleavage system is composed of four proteins: P, T, L and H. The cofactor is pyridoxal 5'-phosphate.

It catalyses the reaction N(6)-[(R)-lipoyl]-L-lysyl-[glycine-cleavage complex H protein] + glycine + H(+) = N(6)-[(R)-S(8)-aminomethyldihydrolipoyl]-L-lysyl-[glycine-cleavage complex H protein] + CO2. Its function is as follows. The glycine cleavage system catalyzes the degradation of glycine. The P protein binds the alpha-amino group of glycine through its pyridoxal phosphate cofactor; CO(2) is released and the remaining methylamine moiety is then transferred to the lipoamide cofactor of the H protein. In Escherichia coli O81 (strain ED1a), this protein is Glycine dehydrogenase (decarboxylating).